The sequence spans 296 residues: Phosphatidylserine decarboxylase proenzyme (296 aa).

Catalysis depends on charge relay system; for autoendoproteolytic cleavage activity residues Asp113, His169, and Ser256. Ser256 acts as the Schiff-base intermediate with substrate; via pyruvic acid; for decarboxylase activity in catalysis. Ser256 is subject to Pyruvic acid (Ser); by autocatalysis.

It belongs to the phosphatidylserine decarboxylase family. PSD-B subfamily. Prokaryotic type II sub-subfamily. As to quaternary structure, heterodimer of a large membrane-associated beta subunit and a small pyruvoyl-containing alpha subunit. The cofactor is pyruvate. Is synthesized initially as an inactive proenzyme. Formation of the active enzyme involves a self-maturation process in which the active site pyruvoyl group is generated from an internal serine residue via an autocatalytic post-translational modification. Two non-identical subunits are generated from the proenzyme in this reaction, and the pyruvate is formed at the N-terminus of the alpha chain, which is derived from the carboxyl end of the proenzyme. The autoendoproteolytic cleavage occurs by a canonical serine protease mechanism, in which the side chain hydroxyl group of the serine supplies its oxygen atom to form the C-terminus of the beta chain, while the remainder of the serine residue undergoes an oxidative deamination to produce ammonia and the pyruvoyl prosthetic group on the alpha chain. During this reaction, the Ser that is part of the protease active site of the proenzyme becomes the pyruvoyl prosthetic group, which constitutes an essential element of the active site of the mature decarboxylase.

It localises to the cell membrane. It carries out the reaction a 1,2-diacyl-sn-glycero-3-phospho-L-serine + H(+) = a 1,2-diacyl-sn-glycero-3-phosphoethanolamine + CO2. It participates in phospholipid metabolism; phosphatidylethanolamine biosynthesis; phosphatidylethanolamine from CDP-diacylglycerol: step 2/2. Functionally, catalyzes the formation of phosphatidylethanolamine (PtdEtn) from phosphatidylserine (PtdSer). The polypeptide is Phosphatidylserine decarboxylase proenzyme (Clostridium kluyveri (strain ATCC 8527 / DSM 555 / NBRC 12016 / NCIMB 10680 / K1)).